The sequence spans 144 residues: Glycine-rich protein HC1 (144 aa).

The chain crosses the membrane as a helical span at residues 5–25 (IFLLLGLSIAFAILISSEVAA). 11 consecutive repeat copies span residues 37-42 (GYNNGG), 43-48 (GYHNGG), 50-55 (GYNNGG), 56-61 (GYHNGG), 63-68 (GYNNGG), 69-74 (GYHNGG), 76-81 (GYNNGG), 82-87 (GYHNGG), 89-94 (GYNNGG), 102-107 (GYNNGG), and 108-113 (GYHGGG). The segment at 37 to 113 (GYNNGGGYHN…NNGGGYHGGG (77 aa)) is 11 X 6 AA tandem repeats of G-Y-[NH]-N-G -G.

Belongs to the GRP family.

It localises to the membrane. The polypeptide is Glycine-rich protein HC1 (Oxybasis rubra (Red goosefoot)).